The primary structure comprises 103 residues: UPF0145 protein Rsph17025_2361 (103 aa).

The protein belongs to the UPF0145 family.

The polypeptide is UPF0145 protein Rsph17025_2361 (Cereibacter sphaeroides (strain ATCC 17025 / ATH 2.4.3) (Rhodobacter sphaeroides)).